The primary structure comprises 374 residues: uncharacterized protein (374 aa).

Residues 86–104 show a composition bias toward low complexity; it reads RPAATAGTTPATGASGSAR. The tract at residues 86 to 109 is disordered; sequence RPAATAGTTPATGASGSARPTDAA. The region spanning 179 to 354 is the Macro domain; that stretch reads WWRRSNTTRG…LQRVVFAVHG (176 aa).

This is an uncharacterized protein from Mycobacterium tuberculosis (strain CDC 1551 / Oshkosh).